A 233-amino-acid chain; its full sequence is 5'-methylthioadenosine/S-adenosylhomocysteine nucleosidase (233 aa).

E12 serves as the catalytic Proton acceptor. Residues G78, I152, and 173–174 each bind substrate; that span reads ME. Residue D197 is the Proton donor of the active site.

The protein belongs to the PNP/UDP phosphorylase family. MtnN subfamily. Homodimer.

It catalyses the reaction S-adenosyl-L-homocysteine + H2O = S-(5-deoxy-D-ribos-5-yl)-L-homocysteine + adenine. It carries out the reaction S-methyl-5'-thioadenosine + H2O = 5-(methylsulfanyl)-D-ribose + adenine. The enzyme catalyses 5'-deoxyadenosine + H2O = 5-deoxy-D-ribose + adenine. It functions in the pathway amino-acid biosynthesis; L-methionine biosynthesis via salvage pathway; S-methyl-5-thio-alpha-D-ribose 1-phosphate from S-methyl-5'-thioadenosine (hydrolase route): step 1/2. Functionally, catalyzes the irreversible cleavage of the glycosidic bond in both 5'-methylthioadenosine (MTA) and S-adenosylhomocysteine (SAH/AdoHcy) to adenine and the corresponding thioribose, 5'-methylthioribose and S-ribosylhomocysteine, respectively. Also cleaves 5'-deoxyadenosine, a toxic by-product of radical S-adenosylmethionine (SAM) enzymes, into 5-deoxyribose and adenine. Thus, is required for in vivo function of the radical SAM enzymes biotin synthase and lipoic acid synthase, that are inhibited by 5'-deoxyadenosine accumulation. The polypeptide is 5'-methylthioadenosine/S-adenosylhomocysteine nucleosidase (Yersinia pestis bv. Antiqua (strain Angola)).